The following is a 299-amino-acid chain: HTH-type transcriptional regulator ArgP (299 aa).

In terms of domain architecture, HTH lysR-type spans 4–60 (LDYKLLLALDAVMQEQNFERAAQRLHITQSAISQRIKQLEQQFAEPLLIRSQPLQAT). A DNA-binding region (H-T-H motif) is located at residues 21–40 (FERAAQRLHITQSAISQRIK).

Belongs to the LysR transcriptional regulatory family. Homodimer.

In terms of biological role, controls the transcription of genes involved in arginine and lysine metabolism. The polypeptide is HTH-type transcriptional regulator ArgP (Aeromonas salmonicida).